Consider the following 214-residue polypeptide: Riboflavin kinase (214 aa).

The H-T-H motif-like stretch occupies residues 1 to 91 (MRSIMEVETL…YCSIFEDGGA (91 aa)). The tract at residues 92 to 214 (PVMRGKVVTG…DGDEVEVTLE (123 aa)) is riboflavin kinase. 101 to 106 (GLGEGQ) is a CDP binding site. Mg(2+) contacts are provided by Thr130 and Asn132. Thr182 and Glu190 together coordinate FMN. 195–198 (IKLR) lines the CDP pocket.

The protein belongs to the archaeal riboflavin kinase family. It depends on Mg(2+) as a cofactor.

It carries out the reaction riboflavin + CTP = CDP + FMN + H(+). The protein operates within cofactor biosynthesis; FMN biosynthesis; FMN from riboflavin (CTP route): step 1/1. In terms of biological role, catalyzes the CTP-dependent phosphorylation of riboflavin (vitamin B2) to form flavin mononucleotide (FMN). This Methanocella arvoryzae (strain DSM 22066 / NBRC 105507 / MRE50) protein is Riboflavin kinase (ribK).